Consider the following 358-residue polypeptide: Peptide chain release factor 1 (358 aa).

An N5-methylglutamine modification is found at Gln-233.

It belongs to the prokaryotic/mitochondrial release factor family. Methylated by PrmC. Methylation increases the termination efficiency of RF1.

Its subcellular location is the cytoplasm. Functionally, peptide chain release factor 1 directs the termination of translation in response to the peptide chain termination codons UAG and UAA. The chain is Peptide chain release factor 1 from Lachnoclostridium phytofermentans (strain ATCC 700394 / DSM 18823 / ISDg) (Clostridium phytofermentans).